Consider the following 444-residue polypeptide: Gentisate transporter (444 aa).

Transmembrane regions (helical) follow at residues 42 to 64, 79 to 101, 108 to 127, 131 to 153, 166 to 188, 198 to 220, 252 to 274, 289 to 311, 318 to 340, 344 to 366, 378 to 400, and 410 to 428; these read AAVLIGWFFVIFDGYDLIVYGTV, LGTIGSTAFFGMAIGAVFIGRLS, AAVIGSVLILSVFTMLCAFA, WVFGAFRFIAGLGLGGLVPSVNA, AWATVMMSGVPIGGSIAAVLALV, WRFMFLIALIPLVVGLPIAMKVI, WISIWFALATFVTLLAWYGLGTW, ALMFTLALNLGAVIGSVVTAWAG, RSGVIAAGIAGIALLLLLTYPPV, YVILILAGVGTHGTQILIIAAVA, LGWALGVGRIGAVVAPQLAGLLL, and FIMFGTAALLSALALSVLL.

Belongs to the major facilitator superfamily. Aromatic acid:H(+) symporter (AAHS) (TC 2.A.1.15) family.

It is found in the cell membrane. Its function is as follows. Transport of gentisate (2,5-dihydroxybenzoate) into the cell. Does not transport 3-hydroxybenzoate or benzoate. The polypeptide is Gentisate transporter (genK) (Corynebacterium glutamicum (strain ATCC 13032 / DSM 20300 / JCM 1318 / BCRC 11384 / CCUG 27702 / LMG 3730 / NBRC 12168 / NCIMB 10025 / NRRL B-2784 / 534)).